Here is a 108-residue protein sequence, read N- to C-terminus: Signal recognition particle 19 kDa protein (108 aa).

It belongs to the SRP19 family. In terms of assembly, part of the signal recognition particle protein translocation system, which is composed of SRP and FtsY. Archaeal SRP consists of a 7S RNA molecule of 300 nucleotides and two protein subunits: SRP54 and SRP19.

Its subcellular location is the cytoplasm. In terms of biological role, involved in targeting and insertion of nascent membrane proteins into the cytoplasmic membrane. Binds directly to 7S RNA and mediates binding of the 54 kDa subunit of the SRP. The protein is Signal recognition particle 19 kDa protein of Thermococcus kodakarensis (strain ATCC BAA-918 / JCM 12380 / KOD1) (Pyrococcus kodakaraensis (strain KOD1)).